The sequence spans 887 residues: ABC transporter A family member 10 (887 aa).

The next 7 helical transmembrane spans lie at 38–58 (GIQY…VITL), 198–218 (YLYV…LLVT), 245–265 (IIIV…VVLY), 277–297 (VMLF…GIIL), 309–329 (AISS…QFYL), 335–355 (SSWL…EFLY), and 376–396 (ISFL…WYIT). The span at 443 to 469 (NNCNNNNTSPSSSSSSQSSPLNKPLLS) shows a compositional bias: low complexity. The interval 443–474 (NNCNNNNTSPSSSSSSQSSPLNKPLLSGDSDD) is disordered. Residues 481–728 (IRLVNLKKTY…FNLGYILTIV (248 aa)) enclose the ABC transporter domain. 519–526 (GQNGSGKT) lines the ATP pocket. Residues 774 to 797 (NNNNNENNSNNSDGSSSSSDSSSS) are compositionally biased toward low complexity. The interval 774–799 (NNNNNENNSNNSDGSSSSSDSSSSKD) is disordered.

This sequence belongs to the ABC transporter superfamily. ABCA family.

The protein resides in the membrane. This is ABC transporter A family member 10 (abcA10) from Dictyostelium discoideum (Social amoeba).